The primary structure comprises 721 residues: MRKILKLKIGRDELVFETGFMAKQANGSVLATYGGSSVLATVCCSNNVREDLDFVPLSVEYNEKYYAAGKIPGGFIKREGKPKDKEILVSRLIDRPMRPLFDKRFGREIQVIPTTLATDQLNPPDIVGMNAAFTAVFLSDIPFNGPIAAVRMVYLNGKFIVNPSFEEIHDSDLDIVVAGSLNGITMVEGGANEVSEDILLSAIDGAHEYIKQICNAQKEFLDIVGEKEKLPLAFEEKIFEFKEELKDFIYTDLKEACFVKGKLNRDKAITLLRNKSYEHFSSLEKLTDSNESLFYKAFDDFEREIVRNSILNDKIRTDGRTPNEIRDIIAEVDILSRTHGSALFTRGETQALAVTTLGTSIDEQIMDDIDGDKRLNFMLHYNFPPFSVGETGRLMTGRREIGHGHLAQRALESMVPGKNDFPYTIRVVSEILESNGSSSMATVCAGSMSLMSAGVPVKRQVAGIAMGLISEGDKYVVLSDILGEEDHLGDMDFKVAGTKNGITGFQMDIKIENVTKHLMRDALEQARIGRMHILSVMDTVISDSRVGISKYAPKIVQLQIDIDKISLVIGSTGKTVKAITDEFEVKVQIEQNGKIILFGDDDFKMQKAKERIESIVREPKVGEIYEGIVKKINSFGAFIELTPTKEGFLSTRLKSRDNKYGSGRFGTGNRYPRFGGGDNIRGNVGLVRPPKLEEGQQIKVKIIDIDKFGKIDLEVVRDKDY.

The Mg(2+) site is built by Asp-486 and Asp-492. Positions 553–612 constitute a KH domain; it reads PKIVQLQIDIDKISLVIGSTGKTVKAITDEFEVKVQIEQNGKIILFGDDDFKMQKAKERI. The 95-residue stretch at 622-716 folds into the S1 motif domain; it reads GEIYEGIVKK…KFGKIDLEVV (95 aa).

The protein belongs to the polyribonucleotide nucleotidyltransferase family. Requires Mg(2+) as cofactor.

Its subcellular location is the cytoplasm. The enzyme catalyses RNA(n+1) + phosphate = RNA(n) + a ribonucleoside 5'-diphosphate. Involved in mRNA degradation. Catalyzes the phosphorolysis of single-stranded polyribonucleotides processively in the 3'- to 5'-direction. This Borrelia garinii subsp. bavariensis (strain ATCC BAA-2496 / DSM 23469 / PBi) (Borreliella bavariensis) protein is Polyribonucleotide nucleotidyltransferase.